A 719-amino-acid chain; its full sequence is DNA replication licensing factor MCM7 (719 aa).

Alanine 2 carries the N-acetylalanine modification. Residues lysine 15 and lysine 28 each participate in a glycyl lysine isopeptide (Lys-Gly) (interchain with G-Cter in SUMO2) cross-link. 2 positions are modified to phosphoserine: serine 121 and serine 314. The MCM domain occupies 332–538; that stretch reads FYEKLAASIA…NDLRLAQHIT (207 aa). Tyrosine 345 serves as a coordination point for ATP. Serine 365 is modified (phosphoserine). The ATP site is built by glycine 384, alanine 386, lysine 387, serine 388, and asparagine 489. Serine 500 is subject to Phosphoserine. Positions 513–516 match the Arginine finger motif; sequence SRFD. Arginine 514 contributes to the ATP binding site. Residues 521–564 are interaction with RAD17; the sequence is IQDRPDRDNDLRLAQHITYVHQHSRQPPAQFEPLDMKLMRRYIA. The interval 577-719 is interaction with ATRIP; it reads LADYITAAYV…NTARTRITFV (143 aa). Arginine 604 provides a ligand contact to ATP. A Phosphoserine modification is found at serine 678.

Belongs to the MCM family. In terms of assembly, component of the MCM2-7 complex. The complex forms a toroidal hexameric ring with the proposed subunit order MCM2-MCM6-MCM4-MCM7-MCM3-MCM5. Component of the CMG helicase complex, a hexameric ring of related MCM2-7 subunits stabilized by CDC45 and the tetrameric GINS complex. Interacts with the ATR-ATRIP complex and with RAD17. Interacts with TIPIN. Interacts with MCMBP. Interacts with ANKRD17. Component of the replisome complex composed of at least DONSON, MCM2, MCM7, PCNA and TICRR. In terms of processing, O-glycosylated (O-GlcNAcylated), in a cell cycle-dependent manner. Ubiquitinated by ECS(LRR1) E3 ubiquitin-protein ligase complex when forks converge following formation of DNA interstrand cross-links. During mitosis, ubiquitinated by TRAIP when forks converge following formation of DNA interstrand cross-links. Short ubiquitin chains on MCM7 promote recruitment of DNA glycosylase NEIL3. If the interstrand cross-link cannot be cleaved by NEIL3, the ubiquitin chains continue to grow on MCM7, promoting the unloading of the CMG helicase complex by the VCP/p97 ATPase.

The protein localises to the nucleus. Its subcellular location is the chromosome. It carries out the reaction ATP + H2O = ADP + phosphate + H(+). Functionally, acts as a component of the MCM2-7 complex (MCM complex) which is the replicative helicase essential for 'once per cell cycle' DNA replication initiation and elongation in eukaryotic cells. Core component of CDC45-MCM-GINS (CMG) helicase, the molecular machine that unwinds template DNA during replication, and around which the replisome is built. The active ATPase sites in the MCM2-7 ring are formed through the interaction surfaces of two neighboring subunits such that a critical structure of a conserved arginine finger motif is provided in trans relative to the ATP-binding site of the Walker A box of the adjacent subunit. The six ATPase active sites, however, are likely to contribute differentially to the complex helicase activity. Required for S-phase checkpoint activation upon UV-induced damage. This is DNA replication licensing factor MCM7 (MCM7) from Bos taurus (Bovine).